The sequence spans 978 residues: Receptor like protein 21 (978 aa).

The N-terminal stretch at 1–27 is a signal peptide; sequence MLLAMEGKLFLCQYLIWVMLLLGQLHG. Residues 28 to 930 lie on the Extracellular side of the membrane; it reads CTSCIEKERE…EEDDKAAIDM (903 aa). N64, N79, N102, N116, and N155 each carry an N-linked (GlcNAc...) asparagine glycan. LRR repeat units follow at residues 141–167, 169–189, 190–213, 214–237, 238–262, 264–287, 288–310, 312–335, 337–361, 362–385, 386–409, 410–432, 433–455, 457–480, 481–504, 506–529, 530–553, 554–577, 579–601, 602–625, 627–646, 647–671, 673–693, 694–716, 788–811, 812–835, 837–859, and 860–885; these read LRNL…AATS, TTLI…GLKD, LTNL…LIHL, KKLK…ELQN, LINL…VFCK, KNLR…LGSL, KKLR…SFSS, ESLE…PLTN, TNLK…TWQP, NFQL…LLYQ, KKLR…LLTN, NPEL…PTMV, HNLQ…MDHA, PNLV…IGEM, KNIS…FVTG, VSIM…ETNF, PSLD…LSNS, TMLR…LFEF, YLDY…LLGM, PFLS…VDSE, GIYM…DTLL, KSVQ…DTQS, NILL…LCDL, SNVR…CLSN, LRLM…ELGD, LLKL…SFSK, IDVE…LLSS, and LTSL…QFNT. N204 carries an N-linked (GlcNAc...) asparagine glycan. A glycan (N-linked (GlcNAc...) asparagine) is linked at N335. Residues N397 and N420 are each glycosylated (N-linked (GlcNAc...) asparagine). N-linked (GlcNAc...) asparagine glycosylation is found at N463, N482, and N492. N552 is a glycosylation site (N-linked (GlcNAc...) asparagine). Residue N636 is glycosylated (N-linked (GlcNAc...) asparagine). 2 N-linked (GlcNAc...) asparagine glycosylation sites follow: N681 and N716. N-linked (GlcNAc...) asparagine glycosylation occurs at N819. N872 carries an N-linked (GlcNAc...) asparagine glycan. Residues 902-922 form a disordered region; the sequence is TSRSCETNKSPEEADNGQEEE. The chain crosses the membrane as a helical span at residues 931 to 951; that stretch reads MVFYFSTASIYVTALIGVLVL. Residues 952 to 978 lie on the Cytoplasmic side of the membrane; the sequence is MCFDCPWRRAWLRIVDAFIASAKHVLP.

This sequence belongs to the RLP family.

The protein resides in the cell membrane. The polypeptide is Receptor like protein 21 (Arabidopsis thaliana (Mouse-ear cress)).